A 269-amino-acid polypeptide reads, in one-letter code: uncharacterized protein (269 aa).

The next 4 membrane-spanning stretches (helical) occupy residues 64-84 (FVYFLFFLCFFLNNVLFLAGV), 125-145 (YGIANLVFGLISLALLVFLSF), 169-189 (FFISIVVYLLWILLMVLFLVL), and 230-250 (VFATAWAISLVFYSFFFIAIF).

The protein resides in the cell membrane. This is an uncharacterized protein from Mycoplasma genitalium (strain ATCC 33530 / DSM 19775 / NCTC 10195 / G37) (Mycoplasmoides genitalium).